A 162-amino-acid chain; its full sequence is MQCPYCHHTDSRVLESRSAEGGQSIRRRRECLACGRRFTTYERIEFVPITVIKRNGDRESFDRSKLLRGIMTACGKTNIPQQKIEALVDDIEADLQLRSRREVTSAELGEAALQRLRHLSEVAYVRFASVYRQFQGISDFVAELAHLQETPASPELLTISQS.

A zinc finger lies at 3-34 (CPYCHHTDSRVLESRSAEGGQSIRRRRECLAC). The ATP-cone domain occupies 49-139 (ITVIKRNGDR…VYRQFQGISD (91 aa)).

Belongs to the NrdR family. Zn(2+) is required as a cofactor.

Functionally, negatively regulates transcription of bacterial ribonucleotide reductase nrd genes and operons by binding to NrdR-boxes. The protein is Transcriptional repressor NrdR of Thermosynechococcus vestitus (strain NIES-2133 / IAM M-273 / BP-1).